The primary structure comprises 162 residues: NAD(P)H-quinone oxidoreductase subunit N (162 aa).

The protein belongs to the complex I NdhN subunit family. As to quaternary structure, NDH-1 can be composed of about 15 different subunits; different subcomplexes with different compositions have been identified which probably have different functions.

The protein resides in the cellular thylakoid membrane. It catalyses the reaction a plastoquinone + NADH + (n+1) H(+)(in) = a plastoquinol + NAD(+) + n H(+)(out). It carries out the reaction a plastoquinone + NADPH + (n+1) H(+)(in) = a plastoquinol + NADP(+) + n H(+)(out). NDH-1 shuttles electrons from an unknown electron donor, via FMN and iron-sulfur (Fe-S) centers, to quinones in the respiratory and/or the photosynthetic chain. The immediate electron acceptor for the enzyme in this species is believed to be plastoquinone. Couples the redox reaction to proton translocation, and thus conserves the redox energy in a proton gradient. Cyanobacterial NDH-1 also plays a role in inorganic carbon-concentration. In Trichormus variabilis (strain ATCC 29413 / PCC 7937) (Anabaena variabilis), this protein is NAD(P)H-quinone oxidoreductase subunit N.